The sequence spans 251 residues: Homeobox protein notochord (251 aa).

Over residues 1–14 (MPSPRPRGSPPPAP) the composition is skewed to pro residues. Residues 1 to 47 (MPSPRPRGSPPPAPSGSRVRPPRSGRSPAPRSPTGPNTPRAPGRFES) form a disordered region. Low complexity predominate over residues 15–35 (SGSRVRPPRSGRSPAPRSPTG). A DNA-binding region (homeobox) is located at residues 156 to 215 (QKRVRTMFNLEQLEELEKVFAKQHNLVGKKRAQLAARLKLTENQVRVWFQNRRVKYQKQQ). A compositionally biased stretch (low complexity) spans 224 to 242 (AEAASLDEPSSSSIASIQS). The interval 224–251 (AEAASLDEPSSSSIASIQSDDAESGVDG) is disordered.

It is found in the nucleus. Functionally, transcription regulator acting downstream of both FOXA2 and Brachyury (T) during notochord development. Required for node morphogenesis. Is essential for cilia formation in the posterior notochord (PNC) and for left-right patterning; acts upstream of FOXJ1 and RFX3 in this process and is required for the expression of various components important for axonemal assembly and function. Plays a role in regulating axial versus paraxial cell fate. Activates the transcription of ciliary proteins C11orf97 homolog, FAM183B and SPACA9 in the embryonic ventral node. The protein is Homeobox protein notochord (NOTO) of Homo sapiens (Human).